Here is a 299-residue protein sequence, read N- to C-terminus: Protoheme IX farnesyltransferase (299 aa).

9 helical membrane-spanning segments follow: residues 26–46, 53–73, 94–114, 121–141, 149–169, 175–195, 217–239, 243–265, and 277–297; these read VNAL…PDGL, FAAT…NCLI, LHSV…LSVL, LTMW…TLLL, IVIG…AVSG, ALLL…SLAL, YTRL…PFAI, GWIY…WRLL, and FRFS…DHYL.

The protein belongs to the UbiA prenyltransferase family. Protoheme IX farnesyltransferase subfamily.

The protein localises to the cell inner membrane. The catalysed reaction is heme b + (2E,6E)-farnesyl diphosphate + H2O = Fe(II)-heme o + diphosphate. Its pathway is porphyrin-containing compound metabolism; heme O biosynthesis; heme O from protoheme: step 1/1. Functionally, converts heme B (protoheme IX) to heme O by substitution of the vinyl group on carbon 2 of heme B porphyrin ring with a hydroxyethyl farnesyl side group. The polypeptide is Protoheme IX farnesyltransferase (Azoarcus sp. (strain BH72)).